A 294-amino-acid chain; its full sequence is Nucleotide-binding protein A2cp1_0165 (294 aa).

17 to 24 (GVSGSGKS) contributes to the ATP binding site. Residue 68–71 (DARE) participates in GTP binding.

The protein belongs to the RapZ-like family.

Displays ATPase and GTPase activities. This is Nucleotide-binding protein A2cp1_0165 from Anaeromyxobacter dehalogenans (strain 2CP-1 / ATCC BAA-258).